The following is a 546-amino-acid chain: Sodium/hydrogen exchanger 2 (546 aa).

Topologically, residues 1-21 (MTMFASLTSKMLSVSTSDHAS) are cytoplasmic. A helical transmembrane segment spans residues 22 to 42 (VVSLNLFVALLCACIVIGHLL). Residues 43–47 (EENRW) are Vacuolar-facing. Residues 48–68 (MNESITALLIGLGTGVVILLI) traverse the membrane as a helical segment. Topologically, residues 69 to 75 (SRGKNSH) are cytoplasmic. An intramembrane region (helical) is located at residues 76 to 96 (LLVFSEDLFFIYLLPPIIFNA). The Cytoplasmic portion of the chain corresponds to 97–111 (GFQVKKKQFFRNFVT). A helical membrane pass occupies residues 112-132 (IMAFGAIGTVVSCTIISLGAI). Over 133 to 148 (QFFKKLDIGTFDLGDF) the chain is Vacuolar. 2 intramembrane regions (helical) span residues 149–168 (LAIG…QVLN) and 174–194 (LLYS…VVLF). At 195–218 (NAIQSFDLTHLNHEAAFQFLGNFF) the chain is on the vacuolar side. The chain crosses the membrane as a helical span at residues 219–239 (YLFLLSTGLGVATGLISAYVI). Residues 240–264 (KKLYFGRHSTDREVALMMLMAYLSY) lie on the Cytoplasmic side of the membrane. Residues 265 to 285 (MLAELFALSGILTVFFCGIVM) traverse the membrane as a helical segment. Residues 286-304 (SHYTWHNVTESSRITTKHA) are Vacuolar-facing. Asn292 carries N-linked (GlcNAc...) asparagine glycosylation. The helical transmembrane segment at 305–325 (FATLSFLAETFIFLYVGMDAL) threads the bilayer. The Cytoplasmic portion of the chain corresponds to 326 to 344 (DIEKWRFVSDSPGTSVAVS). The helical transmembrane segment at 345–365 (SILMGLVMLGRAAFVFPLSFL) threads the bilayer. The Vacuolar segment spans residues 366-381 (SNLAKKHQSEKISIKQ). Residues 382 to 402 (QVVIWWAGLMRGAVSMALAYN) traverse the membrane as a helical segment. At 403-415 (KFTRSGHTELRGN) the chain is on the cytoplasmic side. A helical transmembrane segment spans residues 416-436 (AIMITSTITVCLFSTMVFGML). The Vacuolar segment spans residues 437 to 546 (TKPLIRYLMP…ERSSHDLSKP (110 aa)).

Belongs to the monovalent cation:proton antiporter 1 (CPA1) transporter (TC 2.A.36) family. Expressed in roots and shoots.

The protein resides in the vacuole membrane. It catalyses the reaction Na(+)(in) + H(+)(out) = Na(+)(out) + H(+)(in). The enzyme catalyses K(+)(in) + H(+)(out) = K(+)(out) + H(+)(in). Functionally, acts in low affinity electroneutral exchange of protons for cations such as Na(+) or K(+) across membranes. May also exchange Li(+) and Cs(+) with a lower affinity. Involved in vacuolar ion compartmentalization necessary for cell volume regulation and cytoplasmic Na(+) detoxification. This chain is Sodium/hydrogen exchanger 2 (NHX2), found in Arabidopsis thaliana (Mouse-ear cress).